Reading from the N-terminus, the 1399-residue chain is DNA-directed RNA polymerase subunit beta' (1399 aa).

Positions 70, 72, 85, and 88 each coordinate Zn(2+). Mg(2+) is bound by residues D460, D462, and D464. C814, C888, C895, and C898 together coordinate Zn(2+).

This sequence belongs to the RNA polymerase beta' chain family. As to quaternary structure, the RNAP catalytic core consists of 2 alpha, 1 beta, 1 beta' and 1 omega subunit. When a sigma factor is associated with the core the holoenzyme is formed, which can initiate transcription. It depends on Mg(2+) as a cofactor. The cofactor is Zn(2+).

The enzyme catalyses RNA(n) + a ribonucleoside 5'-triphosphate = RNA(n+1) + diphosphate. Its function is as follows. DNA-dependent RNA polymerase catalyzes the transcription of DNA into RNA using the four ribonucleoside triphosphates as substrates. In Pseudomonas fluorescens (strain ATCC BAA-477 / NRRL B-23932 / Pf-5), this protein is DNA-directed RNA polymerase subunit beta'.